A 172-amino-acid chain; its full sequence is Monopolar attachment protein 1 (172 aa).

The segment covering 15 to 30 (KKNKNPKISNSKKKNS) has biased composition (basic residues). Residues 15–43 (KKNKNPKISNSKKKNSTRPALQDKTNQTL) are disordered. Residues 31-43 (TRPALQDKTNQTL) show a composition bias toward polar residues. The short motif at 100–102 (STP) is the POLO box domain (PBD)-binding element.

In terms of assembly, interacts with rec8, Interacts with plo1.

It localises to the nucleus. Its subcellular location is the chromosome. The protein localises to the centromere. The protein resides in the kinetochore. Its function is as follows. Plays an important role in chromosome segregation during meiosis I by allowing meiotic rec8 to establish cohesion at the centromeric central core and thereby promote the side-by-side structure of kinetochores at meiosis I. Enables monopolar attachment during meiosis I. Required to facilitate kinetochore mono-orientation during meiosis I, when kinetochores on sister chromosomes face the same direction and are thus captured and pulled by spindle fibers from the same pole. Acts in collaboration with plo1. This is Monopolar attachment protein 1 (moa1) from Schizosaccharomyces pombe (strain 972 / ATCC 24843) (Fission yeast).